A 257-amino-acid chain; its full sequence is UPF0246 protein ACICU_02469 (257 aa).

This sequence belongs to the UPF0246 family.

This chain is UPF0246 protein ACICU_02469, found in Acinetobacter baumannii (strain ACICU).